Reading from the N-terminus, the 293-residue chain is Release factor glutamine methyltransferase (293 aa).

Residues 130–134 (GTGSG), D153, W182, and N199 contribute to the S-adenosyl-L-methionine site. A substrate-binding site is contributed by 199–202 (NPPY).

This sequence belongs to the protein N5-glutamine methyltransferase family. PrmC subfamily.

It carries out the reaction L-glutaminyl-[peptide chain release factor] + S-adenosyl-L-methionine = N(5)-methyl-L-glutaminyl-[peptide chain release factor] + S-adenosyl-L-homocysteine + H(+). Its function is as follows. Methylates the class 1 translation termination release factors RF1/PrfA and RF2/PrfB on the glutamine residue of the universally conserved GGQ motif. This Prochlorococcus marinus (strain SARG / CCMP1375 / SS120) protein is Release factor glutamine methyltransferase.